Reading from the N-terminus, the 543-residue chain is Chaperonin GroEL (543 aa).

ATP-binding positions include 29 to 32 (TLGP), 86 to 90 (DGTTT), Gly-413, 476 to 478 (NAA), and Asp-492.

The protein belongs to the chaperonin (HSP60) family. As to quaternary structure, forms a cylinder of 14 subunits composed of two heptameric rings stacked back-to-back. Interacts with the co-chaperonin GroES.

It localises to the cytoplasm. It catalyses the reaction ATP + H2O + a folded polypeptide = ADP + phosphate + an unfolded polypeptide.. Functionally, together with its co-chaperonin GroES, plays an essential role in assisting protein folding. The GroEL-GroES system forms a nano-cage that allows encapsulation of the non-native substrate proteins and provides a physical environment optimized to promote and accelerate protein folding. The chain is Chaperonin GroEL from Streptococcus pyogenes serotype M3 (strain SSI-1).